The chain runs to 375 residues: GDSL esterase/lipase At5g45960 (375 aa).

Positions 1-28 (MRSHHRHFSSYVSFILFLFLFFISFSSS) are cleaved as a signal peptide. S54 functions as the Nucleophile in the catalytic mechanism. N340 carries an N-linked (GlcNAc...) asparagine glycan. Active-site residues include D348 and H351.

It belongs to the 'GDSL' lipolytic enzyme family.

The protein resides in the secreted. The protein is GDSL esterase/lipase At5g45960 of Arabidopsis thaliana (Mouse-ear cress).